Consider the following 409-residue polypeptide: 2,3-bisphosphoglycerate-independent phosphoglycerate mutase (409 aa).

Residues 160-179 are disordered; the sequence is ITDADPKHEGNKPKTVKPLD.

The protein belongs to the BPG-independent phosphoglycerate mutase family. A-PGAM subfamily.

The enzyme catalyses (2R)-2-phosphoglycerate = (2R)-3-phosphoglycerate. The protein operates within carbohydrate degradation; glycolysis; pyruvate from D-glyceraldehyde 3-phosphate: step 3/5. In terms of biological role, catalyzes the interconversion of 2-phosphoglycerate and 3-phosphoglycerate. The protein is 2,3-bisphosphoglycerate-independent phosphoglycerate mutase of Methanosphaera stadtmanae (strain ATCC 43021 / DSM 3091 / JCM 11832 / MCB-3).